The sequence spans 360 residues: Cyclin-D1-binding protein 1 (360 aa).

Ala2 bears the N-acetylalanine mark. Interaction with TCF3 regions lie at residues 2-184 (ASAT…VDFV) and 150-360 (ISYN…ELEL). Interaction with RPLP0 stretches follow at residues 2–190 (ASAT…AHEE) and 240–360 (LIIP…ELEL). The tract at residues 2-208 (ASATAPAAAV…DPYSGLLNDT (207 aa)) is required for interaction with CCND1.

It belongs to the CCNDBP1 family. As to quaternary structure, interacts with CCND1 and GRAP2. May also interact with COPS5, RPLP0, SIRT6, SYF2 and TCF3. Post-translationally, phosphorylated.

It localises to the cytoplasm. It is found in the nucleus. May negatively regulate cell cycle progression. May act at least in part via inhibition of the cyclin-D1/CDK4 complex, thereby preventing phosphorylation of RB1 and blocking E2F-dependent transcription. The polypeptide is Cyclin-D1-binding protein 1 (CCNDBP1) (Pongo abelii (Sumatran orangutan)).